Reading from the N-terminus, the 708-residue chain is DNA-directed RNA polymerase III subunit RPC5 (708 aa).

Over residues 146 to 155 the composition is skewed to basic and acidic residues; sequence DAKHREREAA. The segment at 146 to 170 is disordered; it reads DAKHREREAANEAGDSSQDEAEDDV. A phosphoserine mark is found at S161 and S162. K171 is covalently cross-linked (Glycyl lysine isopeptide (Lys-Gly) (interchain with G-Cter in SUMO2)). Position 192 is a phosphoserine (S192). A Phosphotyrosine modification is found at Y224. A Glycyl lysine isopeptide (Lys-Gly) (interchain with G-Cter in SUMO2) cross-link involves residue K432. Residues 485–552 are disordered; it reads QLRVPAVPPG…DSFNGHPPQG (68 aa). A Glycyl lysine isopeptide (Lys-Gly) (interchain with G-Cter in SUMO1); alternate cross-link involves residue K498. A Glycyl lysine isopeptide (Lys-Gly) (interchain with G-Cter in SUMO2); alternate cross-link involves residue K498. Acidic residues predominate over residues 502 to 519; sequence VSEEGEEDEEQEAEEEPM. Residues S503 and S522 each carry the phosphoserine modification. The required for Pol III complex stability stretch occupies residues 556–708; it reads TPVARELKAF…MWYLKGTVQS (153 aa). K659 is covalently cross-linked (Glycyl lysine isopeptide (Lys-Gly) (interchain with G-Cter in SUMO2)).

As to quaternary structure, component of the RNA polymerase III complex consisting of at least 17 subunits: a ten-subunit horseshoe-shaped catalytic core composed of POLR3A/RPC1, POLR3B/RPC2, POLR1C/RPAC1, POLR1D/RPAC2, POLR3K/RPC10, POLR2E/RPABC1, POLR2F/RPABC2, POLR2H/RPABC3, POLR2K/RPABC4 and POLR2L/RPABC5; the stalk composed of two subunits POLR3H/RPC8 and CRCP/RPC9, forming a structural mobile part that protrudes out of the core and functions primarily in transcription initiation; and additional subunits homologous to general transcription factors of the RNA polymerase II machinery, POLR3D/RPC4-POLR3E/RPC5 heterodimer and POLR3/CRPC3-POLR3F/RPC6-POLR3G/RPC7 heterotrimer.

It is found in the nucleus. In terms of biological role, DNA-dependent RNA polymerase catalyzes the transcription of DNA into RNA using the four ribonucleoside triphosphates as substrates. Specific peripheric component of RNA polymerase III (Pol III) which synthesizes small non-coding RNAs including 5S rRNA, snRNAs, tRNAs and miRNAs from at least 500 distinct genomic loci. Assembles with POLR3D/RPC4 forming a subcomplex that binds the Pol III core. Enables recruitment of Pol III at transcription initiation site and drives transcription initiation from both type 2 and type 3 DNA promoters. Required for efficient transcription termination and reinitiation. Plays a key role in sensing and limiting infection by intracellular bacteria and DNA viruses. Acts as a nuclear and cytosolic DNA sensor involved in innate immune response. Can sense non-self dsDNA that serves as template for transcription into dsRNA. The non-self RNA polymerase III transcripts, such as Epstein-Barr virus-encoded RNAs (EBERs) induce type I interferon and NF-kappa-B through the RIG-I pathway. The polypeptide is DNA-directed RNA polymerase III subunit RPC5 (Homo sapiens (Human)).